The chain runs to 188 residues: D-glycero-beta-D-manno-heptose-1,7-bisphosphate 7-phosphatase (188 aa).

D11 acts as the Nucleophile in catalysis. The Mg(2+) site is built by D11 and D13. Residues 11 to 13 (DRD), 19 to 22 (DHGY), and 53 to 56 (TNQS) each bind substrate. D13 acts as the Proton donor in catalysis. Zn(2+) is bound by residues C92, H94, C107, and C109. Position 110–111 (110–111 (RK)) interacts with substrate. Residues D136 and K137 each contribute to the Mg(2+) site. K137 contacts substrate.

Belongs to the GmhB family. As to quaternary structure, monomer. The cofactor is Mg(2+). Requires Zn(2+) as cofactor.

The protein localises to the cytoplasm. It carries out the reaction D-glycero-beta-D-manno-heptose 1,7-bisphosphate + H2O = D-glycero-beta-D-manno-heptose 1-phosphate + phosphate. It functions in the pathway nucleotide-sugar biosynthesis; ADP-L-glycero-beta-D-manno-heptose biosynthesis; ADP-L-glycero-beta-D-manno-heptose from D-glycero-beta-D-manno-heptose 7-phosphate: step 2/4. Its pathway is bacterial outer membrane biogenesis; LPS core biosynthesis. Functionally, converts the D-glycero-beta-D-manno-heptose 1,7-bisphosphate intermediate into D-glycero-beta-D-manno-heptose 1-phosphate by removing the phosphate group at the C-7 position in vitro. Also catalyzes the dephosphorylation of D-glycero-alpha-D-manno-heptose 1,7-bisphosphate and 2-deoxy-D-manno-2-octoulosonate-8-phosphate in vitro. The chain is D-glycero-beta-D-manno-heptose-1,7-bisphosphate 7-phosphatase (gmhB) from Salmonella typhi.